The primary structure comprises 29 residues: Cyclotide mobo-B (29 aa).

Positions 1–29 (GKPICGETCAKGKCYTPKCTCNWPICYKN) form a cross-link, cyclopeptide (Gly-Asn). Intrachain disulfides connect Cys5–Cys19, Cys9–Cys21, and Cys14–Cys26.

The protein belongs to the cyclotide family. In terms of processing, this is a cyclic peptide.

In terms of biological role, probably participates in a plant defense mechanism. The chain is Cyclotide mobo-B from Melicytus obovatus (Hymenanthera obovata).